The sequence spans 59 residues: Large ribosomal subunit protein bL32 (59 aa).

This sequence belongs to the bacterial ribosomal protein bL32 family.

This Anaeromyxobacter dehalogenans (strain 2CP-C) protein is Large ribosomal subunit protein bL32.